Reading from the N-terminus, the 397-residue chain is Presenilin-like protein At2g29900 (397 aa).

Topologically, residues 1-17 (MDRNQRPRSILDSLGEE) are cytoplasmic. The chain crosses the membrane as a helical span at residues 18–38 (LIAILTPVSICMFTVVLLVCI). The Lumenal segment spans residues 39–76 (LNSDPSSSSASFSSIATAAYSESDSDSSWDKFVGALLN). A helical transmembrane segment spans residues 77–97 (SVVFVAAITVATFVLVLLFYL). The Cytoplasmic portion of the chain corresponds to 98-106 (RCVKFLKFY). A helical membrane pass occupies residues 107 to 127 (MGFSAFIVLGNLGGEILVLLI). Topologically, residues 128–135 (DRFRFPID) are lumenal. A helical membrane pass occupies residues 136–156 (SITFLILLFNFSVVGVFAVFM). The Cytoplasmic segment spans residues 157–158 (SK). Residues 159 to 179 (FSILITQGYLVWIGVLVAYFF) form a helical membrane-spanning segment. The Lumenal segment spans residues 180 to 188 (TLLPEWTTW). A helical transmembrane segment spans residues 189–209 (VLLVALALYDIAAVLLPVGPL). The active site involves aspartate 198. Residues 210 to 305 (RLLVEMAISR…NSETFLEGIG (96 aa)) are Cytoplasmic-facing. Residues 306 to 326 (LGSSGAIKLGLGDFIFYSVLV) traverse the membrane as a helical segment. Residue aspartate 318 is part of the active site. Topologically, residues 327-336 (GRAAMYDLMT) are lumenal. A helical membrane pass occupies residues 337–357 (VYACYLAIIAGLGITLMLLSV). At 358 to 366 (YQKALPALP) the chain is on the cytoplasmic side. The short motif at 363-365 (PAL) is the PAL element. Residues 367–387 (VSIMLGVVFYFLARLLLEVFV) constitute an intramembrane region (helical). The Cytoplasmic portion of the chain corresponds to 388–397 (VQCSSNLVMF).

Belongs to the peptidase A22A family. As to quaternary structure, homodimer. Probable component of the gamma-secretase complex, a complex composed of a presenilin homodimer, nicastrin, APH1 and PEN2.

It is found in the endoplasmic reticulum membrane. It localises to the golgi apparatus membrane. Its function is as follows. Probable subunit of the gamma-secretase complex, an endoprotease complex that catalyzes the intramembrane cleavage of integral membrane proteins such as Notch receptors. The chain is Presenilin-like protein At2g29900 from Arabidopsis thaliana (Mouse-ear cress).